The sequence spans 509 residues: 2,3-bisphosphoglycerate-independent phosphoglycerate mutase (509 aa).

D12 and S62 together coordinate Mn(2+). Catalysis depends on S62, which acts as the Phosphoserine intermediate. Substrate contacts are provided by residues H123, 153 to 154 (RD), R185, R191, 260 to 263 (RPDR), and K333. D400, H404, D441, H442, and H460 together coordinate Mn(2+).

It belongs to the BPG-independent phosphoglycerate mutase family. As to quaternary structure, monomer. Mn(2+) serves as cofactor.

It carries out the reaction (2R)-2-phosphoglycerate = (2R)-3-phosphoglycerate. It participates in carbohydrate degradation; glycolysis; pyruvate from D-glyceraldehyde 3-phosphate: step 3/5. In terms of biological role, catalyzes the interconversion of 2-phosphoglycerate and 3-phosphoglycerate. This is 2,3-bisphosphoglycerate-independent phosphoglycerate mutase from Clostridium botulinum (strain Langeland / NCTC 10281 / Type F).